A 363-amino-acid chain; its full sequence is DNA replication and repair protein RecF (363 aa).

31–38 is a binding site for ATP; that stretch reads GANSSGKT.

The protein belongs to the RecF family.

The protein resides in the cytoplasm. In terms of biological role, the RecF protein is involved in DNA metabolism; it is required for DNA replication and normal SOS inducibility. RecF binds preferentially to single-stranded, linear DNA. It also seems to bind ATP. The chain is DNA replication and repair protein RecF from Nitrosococcus oceani (strain ATCC 19707 / BCRC 17464 / JCM 30415 / NCIMB 11848 / C-107).